A 566-amino-acid chain; its full sequence is Transmembrane protein 151B (566 aa).

Low complexity predominate over residues 1–11 (MSPPGSAAGES). The interval 1-25 (MSPPGSAAGESAAGGGGGGGGPGVS) is disordered. A compositionally biased stretch (gly residues) spans 12 to 23 (AAGGGGGGGGPG). 2 consecutive transmembrane segments (helical) span residues 65-85 (CLLLSLLMYGCLGAVAWCHVT) and 112-132 (YVYIPLAFLLMLYAVYLVECW). A compositionally biased stretch (polar residues) spans 495-512 (VNEASCPTEQTRLSSQAS). The interval 495–529 (VNEASCPTEQTRLSSQASMGDDEDDDEEEAGPPPP) is disordered. Over residues 514–524 (GDDEDDDEEEA) the composition is skewed to acidic residues.

The protein belongs to the TMEM151 family.

It is found in the membrane. This Homo sapiens (Human) protein is Transmembrane protein 151B (TMEM151B).